We begin with the raw amino-acid sequence, 403 residues long: 26S proteasome regulatory subunit 6B homolog (403 aa).

At Met-1 the chain carries N-acetylmethionine. Residue 191–198 participates in ATP binding; the sequence is GPPGTGKT.

It belongs to the AAA ATPase family.

The protein resides in the cytoplasm. Its subcellular location is the nucleus. The 26S proteasome is involved in the ATP-dependent degradation of ubiquitinated proteins. The regulatory (or ATPase) complex confers ATP dependency and substrate specificity to the 26S complex. The sequence is that of 26S proteasome regulatory subunit 6B homolog (psmC4) from Dictyostelium discoideum (Social amoeba).